Reading from the N-terminus, the 263-residue chain is Proteasome subunit beta type-4 (263 aa).

An N-acetylmethionine modification is found at M1. The propeptide occupies 1–44; it reads MEAFWESRTGHWAGGPAPGQFYRVPSTPSCLMDPMSAPARPITR. At S26 the chain carries Phosphoserine. A Phosphotyrosine modification is found at Y101.

Belongs to the peptidase T1B family. In terms of assembly, the 26S proteasome consists of a 20S proteasome core and two 19S regulatory subunits. The 20S proteasome core is a barrel-shaped complex made of 28 subunits that are arranged in four stacked rings. The two outer rings are each formed by seven alpha subunits, and the two inner rings are formed by seven beta subunits. The proteolytic activity is exerted by three beta-subunits PSMB5, PSMB6 and PSMB7. Forms a ternary complex with SMAD1 and OAZ1 before PSMB4 is incorporated into the 20S proteasome. Interacts with PRPF19.

It is found in the cytoplasm. The protein localises to the nucleus. In terms of biological role, non-catalytic component of the 20S core proteasome complex involved in the proteolytic degradation of most intracellular proteins. This complex plays numerous essential roles within the cell by associating with different regulatory particles. Associated with two 19S regulatory particles, forms the 26S proteasome and thus participates in the ATP-dependent degradation of ubiquitinated proteins. The 26S proteasome plays a key role in the maintenance of protein homeostasis by removing misfolded or damaged proteins that could impair cellular functions, and by removing proteins whose functions are no longer required. Associated with the PA200 or PA28, the 20S proteasome mediates ubiquitin-independent protein degradation. This type of proteolysis is required in several pathways including spermatogenesis (20S-PA200 complex) or generation of a subset of MHC class I-presented antigenic peptides (20S-PA28 complex). SMAD1/OAZ1/PSMB4 complex mediates the degradation of the CREBBP/EP300 repressor SNIP1. This Rattus norvegicus (Rat) protein is Proteasome subunit beta type-4 (Psmb4).